Consider the following 35-residue polypeptide: Putative neurotoxin (35 aa).

In terms of domain architecture, LCN-type CS-alpha/beta spans 1–35; the sequence is KEGYPKNSEGCKITCLFNDPYCKGLCINLSTQADY.

As to expression, expressed by the venom gland.

It localises to the secreted. In terms of biological role, causes paralysis and death in insects (A.domestica). In Rhopalurus junceus (Caribbean blue scorpion), this protein is Putative neurotoxin.